Consider the following 212-residue polypeptide: Protein-L-isoaspartate O-methyltransferase (212 aa).

Residue serine 62 is part of the active site.

The protein belongs to the methyltransferase superfamily. L-isoaspartyl/D-aspartyl protein methyltransferase family.

It is found in the cytoplasm. The catalysed reaction is [protein]-L-isoaspartate + S-adenosyl-L-methionine = [protein]-L-isoaspartate alpha-methyl ester + S-adenosyl-L-homocysteine. Its function is as follows. Catalyzes the methyl esterification of L-isoaspartyl residues in peptides and proteins that result from spontaneous decomposition of normal L-aspartyl and L-asparaginyl residues. It plays a role in the repair and/or degradation of damaged proteins. This chain is Protein-L-isoaspartate O-methyltransferase, found in Pseudoalteromonas translucida (strain TAC 125).